Reading from the N-terminus, the 446-residue chain is N-succinylarginine dihydrolase 2 (446 aa).

Substrate contacts are provided by residues 20 to 29, asparagine 111, and 138 to 139; these read VGLSPGNLAS and HR. Glutamate 175 is a catalytic residue. Arginine 212 is a substrate binding site. Histidine 246 is an active-site residue. Substrate-binding residues include aspartate 248 and asparagine 361. The active-site Nucleophile is the cysteine 367.

It belongs to the succinylarginine dihydrolase family. As to quaternary structure, homodimer.

The catalysed reaction is N(2)-succinyl-L-arginine + 2 H2O + 2 H(+) = N(2)-succinyl-L-ornithine + 2 NH4(+) + CO2. Its pathway is amino-acid degradation; L-arginine degradation via AST pathway; L-glutamate and succinate from L-arginine: step 2/5. Catalyzes the hydrolysis of N(2)-succinylarginine into N(2)-succinylornithine, ammonia and CO(2). This Caulobacter vibrioides (strain ATCC 19089 / CIP 103742 / CB 15) (Caulobacter crescentus) protein is N-succinylarginine dihydrolase 2.